The sequence spans 115 residues: Photosystem II reaction center Psb28 protein (115 aa).

This sequence belongs to the Psb28 family. In terms of assembly, part of the photosystem II complex.

It localises to the plastid. Its subcellular location is the chloroplast thylakoid membrane. This Trieres chinensis (Marine centric diatom) protein is Photosystem II reaction center Psb28 protein.